We begin with the raw amino-acid sequence, 99 residues long: Class II hydrophobin B (99 aa).

The signal sequence occupies residues 1 to 15; the sequence is MKFFAIAALFAGALA. Disulfide bonds link Cys30–Cys79 and Cys40–Cys70.

Belongs to the cerato-ulmin hydrophobin family.

It is found in the secreted. It localises to the cell wall. The protein localises to the vacuole. Its subcellular location is the cytoplasmic vesicle. Its function is as follows. Aerial growth, conidiation, and dispersal of filamentous fungi in the environment rely upon a capability of their secreting small amphipathic proteins called hydrophobins (HPBs) with low sequence identity. Class I can self-assemble into an outermost layer of rodlet bundles on aerial cell surfaces, conferring cellular hydrophobicity that supports fungal growth, development and dispersal; whereas Class II form highly ordered films at water-air interfaces through intermolecular interactions but contribute nothing to the rodlet structure. Hyd2B contributes to certain cell wall-related features, such as hydrophobicity but is not involved in cell wall-related events during fungal proliferation in host hemocoel. Does not contribute to conidial hydrophobicity. Involved in insect hemocoel colonization independent of cell hydrophobicity. The protein is Class II hydrophobin B of Beauveria bassiana (strain ARSEF 2860) (White muscardine disease fungus).